Consider the following 461-residue polypeptide: Ribulose bisphosphate carboxylase (461 aa).

Asn113 is a binding site for substrate. Lys168 acts as the Proton acceptor in catalysis. Lys170 is a substrate binding site. Lys193, Asp195, and Glu196 together coordinate Mg(2+). Residue Lys193 is modified to N6-carboxylysine. His289 functions as the Proton acceptor in the catalytic mechanism. Residues Arg290, His323, and Ser370 each contribute to the substrate site.

The protein belongs to the RuBisCO large chain family. Type II subfamily. Homodimer. Mg(2+) serves as cofactor.

It catalyses the reaction 2 (2R)-3-phosphoglycerate + 2 H(+) = D-ribulose 1,5-bisphosphate + CO2 + H2O. It carries out the reaction D-ribulose 1,5-bisphosphate + O2 = 2-phosphoglycolate + (2R)-3-phosphoglycerate + 2 H(+). In terms of biological role, ruBisCO catalyzes two reactions: the carboxylation of D-ribulose 1,5-bisphosphate, the primary event in carbon dioxide fixation, as well as the oxidative fragmentation of the pentose substrate. Both reactions occur simultaneously and in competition at the same active site. The protein is Ribulose bisphosphate carboxylase of Thiomonas intermedia (strain K12) (Thiobacillus intermedius).